A 92-amino-acid chain; its full sequence is DNA-binding protein HU (92 aa).

The protein belongs to the bacterial histone-like protein family. As to quaternary structure, homodimer.

In terms of biological role, histone-like DNA-binding protein which is capable of wrapping DNA to stabilize it, and thus to prevent its denaturation under extreme environmental conditions. The chain is DNA-binding protein HU (hup) from Buchnera aphidicola subsp. Acyrthosiphon pisum (strain APS) (Acyrthosiphon pisum symbiotic bacterium).